The following is a 318-amino-acid chain: Nitrate reductase [NADH] (318 aa).

In terms of domain architecture, Cytochrome b5 heme-binding spans 216–291 (AKSFTMAEVE…LLEYYIGELA (76 aa)). Positions 251 and 274 each coordinate heme.

The protein belongs to the nitrate reductase family. Homodimer. FAD serves as cofactor. The cofactor is heme. Requires Mo-molybdopterin as cofactor.

It carries out the reaction nitrite + NAD(+) + H2O = nitrate + NADH + H(+). Nitrate reductase is a key enzyme involved in the first step of nitrate assimilation in plants, fungi and bacteria. This chain is Nitrate reductase [NADH], found in Chlorella vulgaris (Green alga).